We begin with the raw amino-acid sequence, 400 residues long: D(3) dopamine receptor (400 aa).

Topologically, residues 1-32 are extracellular; sequence MAPLSQLSGHLNYTCGVENSTGASQARPHAYY. N12 and N19 each carry an N-linked (GlcNAc...) asparagine glycan. A helical transmembrane segment spans residues 33–55; the sequence is ALSYCALILAIVFGNGLVCMAVL. Residues 56–65 lie on the Cytoplasmic side of the membrane; sequence KERALQTTTN. Residues 66–88 traverse the membrane as a helical segment; that stretch reads YLVVSLAVADLLVATLVMPWVVY. Topologically, residues 89-104 are extracellular; sequence LEVTGGVWNFSRVCCD. N97 is a glycosylation site (N-linked (GlcNAc...) asparagine). An intrachain disulfide couples C103 to C181. Residues 105 to 126 traverse the membrane as a helical segment; that stretch reads VFVTLDVMMCTASILNLCAISI. The Cytoplasmic portion of the chain corresponds to 127–149; sequence DRYTAVVMPVHYQHGTGQSSCRR. The helical transmembrane segment at 150 to 170 threads the bilayer; it reads VTLMITAVWVLAFAVSCPLLF. Residues 171–187 lie on the Extracellular side of the membrane; sequence GFNTTGDPTVCSISNPD. N173 carries an N-linked (GlcNAc...) asparagine glycan. Residues 188–209 form a helical membrane-spanning segment; sequence FVIYSSVVSFYLPFGVTVLVYA. Residues 210–329 lie on the Cytoplasmic side of the membrane; sequence RIYVVLKQRR…VPLREKKATQ (120 aa). The helical transmembrane segment at 330–351 threads the bilayer; sequence MVAIVLGAFIVCWLPFFLTHVL. Topologically, residues 352 to 366 are extracellular; that stretch reads NTHCQTCHVSPELYS. A disulfide bond links C355 and C358. Residues 367 to 386 traverse the membrane as a helical segment; sequence ATTWLGYVNSALNPVIYTTF. Over 387 to 400 the chain is Cytoplasmic; sequence NIEFRKAFLKILSC.

The protein belongs to the G-protein coupled receptor 1 family. In terms of assembly, interacts with CLIC6. Interacts with GRK4. Interacts with PALM. Interacts with FLNA (via filamin repeat 21); increases PKA-mediated phosphorylation of FLNA. Post-translationally, phosphorylated by GRK4. In terms of processing, palmitoylated.

Its subcellular location is the cell membrane. Functionally, dopamine receptor whose activity is mediated by G proteins which inhibit adenylyl cyclase. Promotes cell proliferation. This chain is D(3) dopamine receptor (DRD3), found in Chlorocebus aethiops (Green monkey).